The sequence spans 300 residues: Transcription initiation factor IIB (300 aa).

The segment at 3–34 adopts a TFIIB-type zinc-finger fold; sequence KQRVCPVCGSTEFIYDPERGEIVCARCGYVIE. 4 residues coordinate Zn(2+): Cys-7, Cys-10, Cys-26, and Cys-29. 2 consecutive repeat copies span residues 114–197 and 210–291.

It belongs to the TFIIB family.

In terms of biological role, stabilizes TBP binding to an archaeal box-A promoter. Also responsible for recruiting RNA polymerase II to the pre-initiation complex (DNA-TBP-TFIIB). The sequence is that of Transcription initiation factor IIB from Pyrococcus abyssi (strain GE5 / Orsay).